A 162-amino-acid chain; its full sequence is Large ribosomal subunit protein uL10 (162 aa).

Belongs to the universal ribosomal protein uL10 family. As to quaternary structure, part of the ribosomal stalk of the 50S ribosomal subunit. The N-terminus interacts with L11 and the large rRNA to form the base of the stalk. The C-terminus forms an elongated spine to which L12 dimers bind in a sequential fashion forming a multimeric L10(L12)X complex.

Forms part of the ribosomal stalk, playing a central role in the interaction of the ribosome with GTP-bound translation factors. This chain is Large ribosomal subunit protein uL10, found in Vibrio parahaemolyticus serotype O3:K6 (strain RIMD 2210633).